The primary structure comprises 273 residues: 3-methyl-2-oxobutanoate hydroxymethyltransferase (273 aa).

The Mg(2+) site is built by Asp-49 and Asp-88. 3-methyl-2-oxobutanoate contacts are provided by residues Asp-49–Ser-50, Asp-88, and Lys-118. Glu-120 contributes to the Mg(2+) binding site. Catalysis depends on Glu-187, which acts as the Proton acceptor.

The protein belongs to the PanB family. Homodecamer; pentamer of dimers. Requires Mg(2+) as cofactor.

It localises to the cytoplasm. The catalysed reaction is 3-methyl-2-oxobutanoate + (6R)-5,10-methylene-5,6,7,8-tetrahydrofolate + H2O = 2-dehydropantoate + (6S)-5,6,7,8-tetrahydrofolate. The protein operates within cofactor biosynthesis; (R)-pantothenate biosynthesis; (R)-pantoate from 3-methyl-2-oxobutanoate: step 1/2. Its function is as follows. Catalyzes the reversible reaction in which hydroxymethyl group from 5,10-methylenetetrahydrofolate is transferred onto alpha-ketoisovalerate to form ketopantoate. The polypeptide is 3-methyl-2-oxobutanoate hydroxymethyltransferase (Rhizobium rhizogenes (strain K84 / ATCC BAA-868) (Agrobacterium radiobacter)).